The chain runs to 116 residues: Ig heavy chain V region 1B43 (116 aa).

A signal peptide spans 1–18 (MRVLILLCLFTAFPGILS). The segment at 19–48 (DVQLQESGPDLVKPSQSLSLTCTVTGYSIT) is framework-1. Residues Cys-40 and Cys-114 are joined by a disulfide bond. The complementarity-determining-1 stretch occupies residues 49–53 (SGYSW). The framework-2 stretch occupies residues 54-67 (HWIRQFPGNKLEWM). Residues 68 to 84 (GYIHYSGNTSYNPSLKS) form a complementarity-determining-2 region. A framework-3 region spans residues 85-116 (RISITRDTSKNQFFLQLNSVTTEDTATYYCAR).

This is Ig heavy chain V region 1B43 from Mus musculus (Mouse).